A 492-amino-acid chain; its full sequence is Glutamyl-tRNA(Gln) amidotransferase subunit B, mitochondrial (492 aa).

It belongs to the GatB/GatE family. GatB subfamily. In terms of assembly, subunit of the heterotrimeric GatFAB amidotransferase (AdT) complex, composed of A, B and F subunits.

It localises to the mitochondrion. The catalysed reaction is L-glutamyl-tRNA(Gln) + L-glutamine + ATP + H2O = L-glutaminyl-tRNA(Gln) + L-glutamate + ADP + phosphate + H(+). Its function is as follows. Allows the formation of correctly charged Gln-tRNA(Gln) through the transamidation of misacylated Glu-tRNA(Gln) in the mitochondria. The reaction takes place in the presence of glutamine and ATP through an activated gamma-phospho-Glu-tRNA(Gln). The sequence is that of Glutamyl-tRNA(Gln) amidotransferase subunit B, mitochondrial from Komagataella phaffii (strain GS115 / ATCC 20864) (Yeast).